We begin with the raw amino-acid sequence, 114 residues long: Mediator of RNA polymerase II transcription subunit 11 (114 aa).

Residues 28 to 61 (LELSKEKANASLLDRQLNQFQTSINRVESELSSQ) are a coiled coil.

It belongs to the Mediator complex subunit 11 family. In terms of assembly, component of the Mediator complex. Ubiquitously expressed at early stage of development. After fertilization expressed in head region as well as in lateral line primordium.

The protein resides in the nucleus. Functionally, component of the Mediator complex, a coactivator involved in the regulated transcription of nearly all RNA polymerase II-dependent genes. Mediator functions as a bridge to convey information from gene-specific regulatory proteins to the basal RNA polymerase II transcription machinery. Mediator is recruited to promoters by direct interactions with regulatory proteins and serves as a scaffold for the assembly of a functional pre-initiation complex with RNA polymerase II and the general transcription factors. The sequence is that of Mediator of RNA polymerase II transcription subunit 11 (med11) from Danio rerio (Zebrafish).